A 475-amino-acid chain; its full sequence is V-type ATP synthase beta chain (475 aa).

Belongs to the ATPase alpha/beta chains family.

Produces ATP from ADP in the presence of a proton gradient across the membrane. The V-type beta chain is a regulatory subunit. This is V-type ATP synthase beta chain from Anaeromyxobacter dehalogenans (strain 2CP-C).